The chain runs to 360 residues: Archaemetzincin-2 (360 aa).

His-254 serves as a coordination point for Zn(2+). The Proton acceptor role is filled by Glu-255. Zn(2+)-binding residues include His-258, His-264, Cys-265, Cys-270, Cys-289, and Cys-292.

The protein belongs to the peptidase M54 family. Requires Zn(2+) as cofactor.

Functionally, probable zinc metalloprotease. In Macaca fascicularis (Crab-eating macaque), this protein is Archaemetzincin-2 (AMZ2).